A 119-amino-acid polypeptide reads, in one-letter code: Protein TusC (119 aa).

Belongs to the DsrF/TusC family. As to quaternary structure, heterohexamer, formed by a dimer of trimers. The hexameric TusBCD complex contains 2 copies each of TusB, TusC and TusD. The TusBCD complex interacts with TusE.

It is found in the cytoplasm. Its function is as follows. Part of a sulfur-relay system required for 2-thiolation of 5-methylaminomethyl-2-thiouridine (mnm(5)s(2)U) at tRNA wobble positions. The protein is Protein TusC of Buchnera aphidicola subsp. Schizaphis graminum (strain Sg).